Consider the following 479-residue polypeptide: Kynurenine 3-monooxygenase (479 aa).

This sequence belongs to the aromatic-ring hydroxylase family. KMO subfamily. FAD is required as a cofactor.

The protein resides in the mitochondrion outer membrane. It catalyses the reaction L-kynurenine + NADPH + O2 + H(+) = 3-hydroxy-L-kynurenine + NADP(+) + H2O. It functions in the pathway cofactor biosynthesis; NAD(+) biosynthesis; quinolinate from L-kynurenine: step 1/3. Functionally, catalyzes the hydroxylation of L-kynurenine (L-Kyn) to form 3-hydroxy-L-kynurenine (L-3OHKyn). Required for synthesis of quinolinic acid. The sequence is that of Kynurenine 3-monooxygenase from Chaetomium globosum (strain ATCC 6205 / CBS 148.51 / DSM 1962 / NBRC 6347 / NRRL 1970) (Soil fungus).